The primary structure comprises 279 residues: 3-methyl-2-oxobutanoate hydroxymethyltransferase (279 aa).

D43 and D82 together coordinate Mg(2+). Residues 43–44 (DS), D82, and K112 each bind 3-methyl-2-oxobutanoate. E114 is a binding site for Mg(2+). The active-site Proton acceptor is E181.

This sequence belongs to the PanB family. In terms of assembly, homodecamer; pentamer of dimers. It depends on Mg(2+) as a cofactor.

The protein resides in the cytoplasm. It carries out the reaction 3-methyl-2-oxobutanoate + (6R)-5,10-methylene-5,6,7,8-tetrahydrofolate + H2O = 2-dehydropantoate + (6S)-5,6,7,8-tetrahydrofolate. Its pathway is cofactor biosynthesis; (R)-pantothenate biosynthesis; (R)-pantoate from 3-methyl-2-oxobutanoate: step 1/2. Its function is as follows. Catalyzes the reversible reaction in which hydroxymethyl group from 5,10-methylenetetrahydrofolate is transferred onto alpha-ketoisovalerate to form ketopantoate. The protein is 3-methyl-2-oxobutanoate hydroxymethyltransferase of Halalkalibacterium halodurans (strain ATCC BAA-125 / DSM 18197 / FERM 7344 / JCM 9153 / C-125) (Bacillus halodurans).